Reading from the N-terminus, the 228-residue chain is D-lyxose/D-mannose isomerase (228 aa).

4 residues coordinate Mn(2+): H103, H105, E110, and H171.

Belongs to the D-lyxose ketol-isomerase family. Homodimer. The cofactor is Mn(2+).

The catalysed reaction is D-lyxose = D-xylulose. It carries out the reaction D-mannose = D-fructose. Functionally, sugar isomerase that catalyzes the reversible isomerization of D-lyxose to D-xylulose, and D-mannose to D-fructose. Shows optimum activity using D-lyxose as substrate, but can also effectively catalyze the isomerization between D-fructose and D-mannose. Shows lower activity with L-gulose, D-talose and L-ribose. This Serratia proteamaculans protein is D-lyxose/D-mannose isomerase.